The chain runs to 256 residues: Thiazole synthase (256 aa).

The active-site Schiff-base intermediate with DXP is lysine 91. Residues glycine 152, 179–180 (AG), and 201–202 (NT) contribute to the 1-deoxy-D-xylulose 5-phosphate site.

This sequence belongs to the ThiG family. Homotetramer. Forms heterodimers with either ThiH or ThiS.

Its subcellular location is the cytoplasm. The enzyme catalyses [ThiS sulfur-carrier protein]-C-terminal-Gly-aminoethanethioate + 2-iminoacetate + 1-deoxy-D-xylulose 5-phosphate = [ThiS sulfur-carrier protein]-C-terminal Gly-Gly + 2-[(2R,5Z)-2-carboxy-4-methylthiazol-5(2H)-ylidene]ethyl phosphate + 2 H2O + H(+). It participates in cofactor biosynthesis; thiamine diphosphate biosynthesis. Catalyzes the rearrangement of 1-deoxy-D-xylulose 5-phosphate (DXP) to produce the thiazole phosphate moiety of thiamine. Sulfur is provided by the thiocarboxylate moiety of the carrier protein ThiS. In vitro, sulfur can be provided by H(2)S. The polypeptide is Thiazole synthase (Erwinia tasmaniensis (strain DSM 17950 / CFBP 7177 / CIP 109463 / NCPPB 4357 / Et1/99)).